Consider the following 112-residue polypeptide: Small ribosomal subunit protein bS6 (112 aa).

It belongs to the bacterial ribosomal protein bS6 family.

In terms of biological role, binds together with bS18 to 16S ribosomal RNA. The polypeptide is Small ribosomal subunit protein bS6 (rpsF) (Chlamydia pneumoniae (Chlamydophila pneumoniae)).